The sequence spans 90 residues: UPF0298 protein RBAM_014860 (90 aa).

This sequence belongs to the UPF0298 family.

Its subcellular location is the cytoplasm. The polypeptide is UPF0298 protein RBAM_014860 (Bacillus velezensis (strain DSM 23117 / BGSC 10A6 / LMG 26770 / FZB42) (Bacillus amyloliquefaciens subsp. plantarum)).